Consider the following 202-residue polypeptide: 3-isopropylmalate dehydratase small subunit (202 aa).

It belongs to the LeuD family. LeuD type 1 subfamily. Heterodimer of LeuC and LeuD.

The catalysed reaction is (2R,3S)-3-isopropylmalate = (2S)-2-isopropylmalate. It participates in amino-acid biosynthesis; L-leucine biosynthesis; L-leucine from 3-methyl-2-oxobutanoate: step 2/4. Its function is as follows. Catalyzes the isomerization between 2-isopropylmalate and 3-isopropylmalate, via the formation of 2-isopropylmaleate. The polypeptide is 3-isopropylmalate dehydratase small subunit (Rhizobium etli (strain ATCC 51251 / DSM 11541 / JCM 21823 / NBRC 15573 / CFN 42)).